Consider the following 159-residue polypeptide: Large ribosomal subunit protein uL13 (159 aa).

Belongs to the universal ribosomal protein uL13 family. As to quaternary structure, part of the 50S ribosomal subunit.

Functionally, this protein is one of the early assembly proteins of the 50S ribosomal subunit, although it is not seen to bind rRNA by itself. It is important during the early stages of 50S assembly. This is Large ribosomal subunit protein uL13 from Methanopyrus kandleri (strain AV19 / DSM 6324 / JCM 9639 / NBRC 100938).